Consider the following 412-residue polypeptide: Proteasome-activating nucleotidase (412 aa).

Residues 15 to 73 (EDIYQYLLERITNLENRNLELREQFRQMESEKRYVETQKIRYERELRKLKSEIEQLRSP) adopt a coiled-coil conformation. Residues 197–202 (GTGKTL) and His-336 each bind ATP. Positions 410–412 (MFA) are docks into pockets in the proteasome alpha-ring to cause gate opening.

Belongs to the AAA ATPase family. Homohexamer. The hexameric complex has a two-ring architecture resembling a top hat that caps the 20S proteasome core at one or both ends. Upon ATP-binding, the C-terminus of PAN interacts with the alpha-rings of the proteasome core by binding to the intersubunit pockets.

Its subcellular location is the cytoplasm. ATPase which is responsible for recognizing, binding, unfolding and translocation of substrate proteins into the archaeal 20S proteasome core particle. Is essential for opening the gate of the 20S proteasome via an interaction with its C-terminus, thereby allowing substrate entry and access to the site of proteolysis. Thus, the C-termini of the proteasomal ATPase function like a 'key in a lock' to induce gate opening and therefore regulate proteolysis. Unfolding activity requires energy from ATP hydrolysis, whereas ATP binding alone promotes ATPase-20S proteasome association which triggers gate opening, and supports translocation of unfolded substrates. This is Proteasome-activating nucleotidase from Methanoculleus marisnigri (strain ATCC 35101 / DSM 1498 / JR1).